Here is a 217-residue protein sequence, read N- to C-terminus: MPKKFQGENTKSAVARARKAEAKAVSDGKRQKEIEDAYWQDDDKHVARKGQRKEDKEKKRLEQLERKKESQRLLDEEDSKMKAKPTKPAAPSKVTRAEIEETLCKEEEHKATTEKPKTHLEMPLEENVNRRVLEEGEVEARTVEDAIAALSVGKELDRHPERRMKAAFAAFEEINMPLLKQENPNMRLSQLKHLLKKEWMKSPENPMNQQHAMYNSH.

The tract at residues 1–128 (MPKKFQGENT…HLEMPLEENV (128 aa)) is disordered. Basic and acidic residues-rich tracts occupy residues 18–45 (RKAE…DDKH), 52–74 (RKED…QRLL), and 95–128 (TRAE…EENV). Residues 46–82 (VARKGQRKEDKEKKRLEQLERKKESQRLLDEEDSKMK) adopt a coiled-coil conformation.

Belongs to the CCDC124 family. As to quaternary structure, associates with translationally inactive ribosomes in the nonrotated state.

The protein resides in the cytoplasm. It is found in the cytoskeleton. It localises to the microtubule organizing center. The protein localises to the centrosome. Its subcellular location is the midbody. Its function is as follows. Ribosome-binding protein involved in ribosome hibernation: associates with translationally inactive ribosomes and stabilizes the nonrotated conformation of the 80S ribosome, thereby promoting ribosome preservation and storage. This is Coiled-coil domain-containing protein 124-A (ccdc124-a) from Xenopus laevis (African clawed frog).